The chain runs to 241 residues: Phosphoribosylaminoimidazole-succinocarboxamide synthase (241 aa).

This sequence belongs to the SAICAR synthetase family.

The enzyme catalyses 5-amino-1-(5-phospho-D-ribosyl)imidazole-4-carboxylate + L-aspartate + ATP = (2S)-2-[5-amino-1-(5-phospho-beta-D-ribosyl)imidazole-4-carboxamido]succinate + ADP + phosphate + 2 H(+). Its pathway is purine metabolism; IMP biosynthesis via de novo pathway; 5-amino-1-(5-phospho-D-ribosyl)imidazole-4-carboxamide from 5-amino-1-(5-phospho-D-ribosyl)imidazole-4-carboxylate: step 1/2. This is Phosphoribosylaminoimidazole-succinocarboxamide synthase from Methanoculleus marisnigri (strain ATCC 35101 / DSM 1498 / JR1).